Here is a 401-residue protein sequence, read N- to C-terminus: UDP-N-acetylglucosamine--N-acetylmuramyl-(pentapeptide) pyrophosphoryl-undecaprenol N-acetylglucosamine transferase (401 aa).

Residues 1-24 form a disordered region; that stretch reads MTRISVPAGQERNDGGISVPAGQE. UDP-N-acetyl-alpha-D-glucosamine contacts are provided by residues 39-41, Asn-157, Arg-194, Ser-228, and Gln-324; that span reads TAG.

Belongs to the glycosyltransferase 28 family. MurG subfamily.

The protein resides in the cell membrane. The enzyme catalyses di-trans,octa-cis-undecaprenyl diphospho-N-acetyl-alpha-D-muramoyl-L-alanyl-D-glutamyl-meso-2,6-diaminopimeloyl-D-alanyl-D-alanine + UDP-N-acetyl-alpha-D-glucosamine = di-trans,octa-cis-undecaprenyl diphospho-[N-acetyl-alpha-D-glucosaminyl-(1-&gt;4)]-N-acetyl-alpha-D-muramoyl-L-alanyl-D-glutamyl-meso-2,6-diaminopimeloyl-D-alanyl-D-alanine + UDP + H(+). Its pathway is cell wall biogenesis; peptidoglycan biosynthesis. Functionally, cell wall formation. Catalyzes the transfer of a GlcNAc subunit on undecaprenyl-pyrophosphoryl-MurNAc-pentapeptide (lipid intermediate I) to form undecaprenyl-pyrophosphoryl-MurNAc-(pentapeptide)GlcNAc (lipid intermediate II). The protein is UDP-N-acetylglucosamine--N-acetylmuramyl-(pentapeptide) pyrophosphoryl-undecaprenol N-acetylglucosamine transferase of Mycolicibacterium vanbaalenii (strain DSM 7251 / JCM 13017 / BCRC 16820 / KCTC 9966 / NRRL B-24157 / PYR-1) (Mycobacterium vanbaalenii).